A 755-amino-acid polypeptide reads, in one-letter code: DNA ligase 1 (755 aa).

Residues 1–44 (MRRLLTGCLLSSARPLKSRLPLLMSSSLPSSAGKKPKQATLARF) constitute a mitochondrion transit peptide. Arg-2 carries the N-acetylserine modification. Positions 47–60 (SMKNKPTEGTPSPK) are enriched in polar residues. Disordered stretches follow at residues 47 to 79 (SMKN…GEEE) and 97 to 127 (PSSM…QRLV). Ser-58 and Ser-75 each carry phosphoserine. Positions 102 to 114 (SNFSSIPSSAPSS) are enriched in low complexity. Phosphoserine is present on residues Ser-119 and Ser-123. Residues 309–318 (KLRIGLAEKT) form an interaction with target DNA region. Glu-417 contacts ATP. Catalysis depends on Lys-419, which acts as the N6-AMP-lysine intermediate. Positions 424 and 440 each coordinate ATP. A Mg(2+)-binding site is contributed by Glu-472. The tract at residues 493-495 (KRK) is interaction with target DNA. Glu-571 lines the Mg(2+) pocket. Residues Lys-576, Arg-590, and Lys-596 each contribute to the ATP site.

Belongs to the ATP-dependent DNA ligase family. Mg(2+) is required as a cofactor.

Its subcellular location is the mitochondrion. The protein resides in the nucleus. The enzyme catalyses ATP + (deoxyribonucleotide)n-3'-hydroxyl + 5'-phospho-(deoxyribonucleotide)m = (deoxyribonucleotide)n+m + AMP + diphosphate.. Its function is as follows. DNA ligase that seals nicks in double-stranded DNA during DNA replication, DNA recombination and DNA repair. The mitochondrial form is required for mitochondrial DNA maintenance but is non-essential while the nuclear form is essential for cell viability. This is DNA ligase 1 (CDC9) from Saccharomyces cerevisiae (strain ATCC 204508 / S288c) (Baker's yeast).